Here is a 501-residue protein sequence, read N- to C-terminus: 2-isopropylmalate synthase (501 aa).

Residues Val7 to Ala269 form the Pyruvate carboxyltransferase domain. Mn(2+) contacts are provided by Asp16, His204, His206, and Asn240. Residues Gln394–Leu501 are regulatory domain.

This sequence belongs to the alpha-IPM synthase/homocitrate synthase family. LeuA type 1 subfamily. In terms of assembly, homodimer. The cofactor is Mn(2+).

Its subcellular location is the cytoplasm. It catalyses the reaction 3-methyl-2-oxobutanoate + acetyl-CoA + H2O = (2S)-2-isopropylmalate + CoA + H(+). It functions in the pathway amino-acid biosynthesis; L-leucine biosynthesis; L-leucine from 3-methyl-2-oxobutanoate: step 1/4. In terms of biological role, catalyzes the condensation of the acetyl group of acetyl-CoA with 3-methyl-2-oxobutanoate (2-ketoisovalerate) to form 3-carboxy-3-hydroxy-4-methylpentanoate (2-isopropylmalate). The polypeptide is 2-isopropylmalate synthase (Leptospira interrogans serogroup Icterohaemorrhagiae serovar copenhageni (strain Fiocruz L1-130)).